Consider the following 226-residue polypeptide: Triosephosphate isomerase (226 aa).

13 to 15 (NFK) lines the substrate pocket. His-97 serves as the catalytic Electrophile. Glu-145 (proton acceptor) is an active-site residue. Residues Ile-150, Gly-185, and 206–207 (AS) each bind substrate.

The protein belongs to the triosephosphate isomerase family. As to quaternary structure, homotetramer; dimer of dimers.

Its subcellular location is the cytoplasm. The enzyme catalyses D-glyceraldehyde 3-phosphate = dihydroxyacetone phosphate. Its pathway is carbohydrate biosynthesis; gluconeogenesis. It participates in carbohydrate degradation; glycolysis; D-glyceraldehyde 3-phosphate from glycerone phosphate: step 1/1. Its function is as follows. Involved in the gluconeogenesis. Catalyzes stereospecifically the conversion of dihydroxyacetone phosphate (DHAP) to D-glyceraldehyde-3-phosphate (G3P). The sequence is that of Triosephosphate isomerase from Methanobacterium bryantii.